We begin with the raw amino-acid sequence, 450 residues long: 3-phosphoshikimate 1-carboxyvinyltransferase (450 aa).

The interval 1 to 26 (MSGHGTPIPMTSRRASPLKGEAHVPG) is disordered. Positions 28, 29, and 33 each coordinate 3-phosphoshikimate. Phosphoenolpyruvate is bound at residue lysine 28. The phosphoenolpyruvate site is built by glycine 101 and arginine 129. 3-phosphoshikimate is bound by residues serine 174, glutamine 176, aspartate 327, and lysine 354. Glutamine 176 is a phosphoenolpyruvate binding site. The Proton acceptor role is filled by aspartate 327. Phosphoenolpyruvate-binding residues include arginine 358 and arginine 403.

The protein belongs to the EPSP synthase family. Monomer.

The protein resides in the cytoplasm. It carries out the reaction 3-phosphoshikimate + phosphoenolpyruvate = 5-O-(1-carboxyvinyl)-3-phosphoshikimate + phosphate. The protein operates within metabolic intermediate biosynthesis; chorismate biosynthesis; chorismate from D-erythrose 4-phosphate and phosphoenolpyruvate: step 6/7. In terms of biological role, catalyzes the transfer of the enolpyruvyl moiety of phosphoenolpyruvate (PEP) to the 5-hydroxyl of shikimate-3-phosphate (S3P) to produce enolpyruvyl shikimate-3-phosphate and inorganic phosphate. The polypeptide is 3-phosphoshikimate 1-carboxyvinyltransferase (Ruegeria sp. (strain TM1040) (Silicibacter sp.)).